The sequence spans 201 residues: Large ribosomal subunit protein uL4 (201 aa).

The tract at residues 45–75 (AQKSRSEVSGSGKKPWRQKGTGRARSGSLRS) is disordered.

Belongs to the universal ribosomal protein uL4 family. As to quaternary structure, part of the 50S ribosomal subunit.

In terms of biological role, one of the primary rRNA binding proteins, this protein initially binds near the 5'-end of the 23S rRNA. It is important during the early stages of 50S assembly. It makes multiple contacts with different domains of the 23S rRNA in the assembled 50S subunit and ribosome. Forms part of the polypeptide exit tunnel. The protein is Large ribosomal subunit protein uL4 of Buchnera aphidicola subsp. Cinara cedri (strain Cc).